The following is a 166-amino-acid chain: Transcription factor HES-5 (166 aa).

Residues 16 to 72 (KNRLRKPVVEKMRRDRINSSIEQLKLLLEQEFARHQPNSKLEKADILEMAVSYLKHS) form the bHLH domain. Residues 88–119 (YSEGYSWCLQEAVQFLTLHAASDTQMKLLYHF) form the Orange domain. The tract at residues 125–166 (PAAPVKETPTPGAAPQPARSSTKAAASVSTSRQSACGLWRPW) is disordered. A compositionally biased stretch (low complexity) spans 142-156 (ARSSTKAAASVSTSR). The WRPW motif motif lies at 163–166 (WRPW).

Transcription repression requires formation of a complex with a corepressor protein of the Groucho/TLE family. In terms of tissue distribution, expressed predominantly in embryonic neural lineage cells.

The protein resides in the nucleus. In terms of biological role, transcriptional repressor of genes that require a bHLH protein for their transcription. Plays an important role as neurogenesis negative regulator. This chain is Transcription factor HES-5 (Hes5), found in Rattus norvegicus (Rat).